A 210-amino-acid chain; its full sequence is Cuticle collagen 2C (210 aa).

A disordered region spans residues 11–210 (CTGGQAGPPG…GVFFEDGTRR (200 aa)). 2 stretches are compositionally biased toward pro residues: residues 40 to 76 (PGRP…PGEP) and 88 to 103 (DAPP…PGPP). The segment covering 105-122 (KAGAPGAAGQPGANAPSE) has biased composition (low complexity). Pro residues predominate over residues 123–144 (PLVPGPPGPPGPTGPEGPPGPN). Positions 167-179 (HPGAPGNAGHPGQ) are enriched in low complexity.

The protein belongs to the cuticular collagen family.

In terms of biological role, nematode cuticles are composed largely of collagen-like proteins. The cuticle functions both as an exoskeleton and as a barrier to protect the worm from its environment. This chain is Cuticle collagen 2C (2C), found in Haemonchus contortus (Barber pole worm).